A 193-amino-acid chain; its full sequence is 3-isopropylmalate dehydratase small subunit (193 aa).

The protein belongs to the LeuD family. LeuD type 1 subfamily. In terms of assembly, heterodimer of LeuC and LeuD.

The catalysed reaction is (2R,3S)-3-isopropylmalate = (2S)-2-isopropylmalate. The protein operates within amino-acid biosynthesis; L-leucine biosynthesis; L-leucine from 3-methyl-2-oxobutanoate: step 2/4. Functionally, catalyzes the isomerization between 2-isopropylmalate and 3-isopropylmalate, via the formation of 2-isopropylmaleate. This Bacillus thuringiensis subsp. konkukian (strain 97-27) protein is 3-isopropylmalate dehydratase small subunit.